A 141-amino-acid chain; its full sequence is HTH-type transcriptional repressor NsrR (141 aa).

The 128-residue stretch at 2–129 folds into the HTH rrf2-type domain; that stretch reads QLTNFTDFGL…DQHTIQDMLT (128 aa). Residues 28–51 constitute a DNA-binding region (H-T-H motif); that stretch reads ITVVTETFDVSRNHMVKIINKLGQ. [2Fe-2S] cluster-binding residues include cysteine 91, cysteine 96, and cysteine 102.

It depends on [2Fe-2S] cluster as a cofactor.

Nitric oxide-sensitive repressor of genes involved in protecting the cell against nitrosative stress. May require iron for activity. In Aliivibrio salmonicida (strain LFI1238) (Vibrio salmonicida (strain LFI1238)), this protein is HTH-type transcriptional repressor NsrR.